The primary structure comprises 454 residues: Protein IQ-DOMAIN 1 (454 aa).

The interval 103–113 (GKSKEEAAAIL) is calmodulin-binding. In terms of domain architecture, IQ spans 107–136 (EEAAAILIQSTFRGHLARRESQVMRGQERL). Residues 272–454 (WESSEKEQNT…KGVLKAERTP (183 aa)) form a disordered region. A compositionally biased stretch (polar residues) spans 280–328 (NTTNNDNSSVKNSTNRNSQGGETAKSSNRNKLNSSTKPNTPSASSTATR). Positions 343-356 (KSSDDEAKSSERNR) are enriched in basic and acidic residues. The segment covering 371–388 (LSSSTARRSSNLIPTTKS) has biased composition (polar residues). Positions 397–412 (TSSRVAVTTSTTEESS) are enriched in low complexity. A Nuclear localization signal motif is present at residues 421–428 (KKRLSTSA). Residues 442–454 (KVEKGVLKAERTP) are compositionally biased toward basic and acidic residues.

The protein belongs to the IQD family. As to quaternary structure, binds to multiple calmodulin (CaM) in the presence of Ca(2+)(e.g. CaM1 and CaM2) and CaM-like (e.g. CML8 and CML9) proteins. Interacts with KLCR1. Expressed in roots, flowers, stems, siliques, inflorescence stems and whole shoots. Restricted to the vascular bundles.

The protein localises to the nucleus. Its subcellular location is the nucleolus. It is found in the cytoplasm. It localises to the cytoskeleton. May be involved in cooperative interactions with calmodulins or calmodulin-like proteins. Modulates expression of glucosinolate pathway genes. May associate with nucleic acids and regulate gene expression at the transcriptional or post-transcriptional level. Recruits KLCR1 and calmodulin proteins to microtubules, thus being a potential scaffold in cellular signaling and trafficking. This chain is Protein IQ-DOMAIN 1, found in Arabidopsis thaliana (Mouse-ear cress).